A 347-amino-acid polypeptide reads, in one-letter code: uncharacterized protein (347 aa).

5 disordered regions span residues 1 to 40, 72 to 92, 133 to 158, 173 to 209, and 306 to 347; these read MAQELAAPLSCGQPPGQNITETTTDPWDEGDLRFEPSNSM, SCEDSSSEGPSMHFVPPIQGS, SDSTTNCDLSGDNKDKHPKEKTQLTL, ENQKDDKDDDSVFPESAQEEDSQLPSSSLPGMAQVSH, and EDPR…PPDF. The span at 15–25 shows a compositional bias: polar residues; that stretch reads PGQNITETTTD. The span at 143–154 shows a compositional bias: basic and acidic residues; sequence GDNKDKHPKEKT. The span at 179–194 shows a compositional bias: acidic residues; the sequence is KDDDSVFPESAQEEDS. Residues 195 to 209 are compositionally biased toward polar residues; it reads QLPSSSLPGMAQVSH. Over residues 306–318 the composition is skewed to basic and acidic residues; sequence EDPREANERPREL. A compositionally biased stretch (basic residues) spans 319–330; it reads ARKKRFSYRSKR.

This is an uncharacterized protein from Bos taurus (Bovine).